Reading from the N-terminus, the 612-residue chain is Transcription factor ffsR (612 aa).

Positions 1–12 are enriched in polar residues; the sequence is MDTLTAPTTQSE. The tract at residues 1–21 is disordered; it reads MDTLTAPTTQSEQPPPPLTAS. The segment at residues 28–60 is a DNA-binding region (zn(2)-C6 fungal-type); sequence CDRCRSHKLRCNRDLMTSTNSPCQRCRKARVKC. Residues 73–82 show a composition bias toward basic and acidic residues; it reads EELKNGENVH. Disordered stretches follow at residues 73–130, 154–249, and 451–470; these read EELK…SMSG, DGST…VTSS, and GQGPPMGPSQGSSSRSTTTN. 3 stretches are compositionally biased toward polar residues: residues 92-103, 154-169, and 238-249; these read SHRTASTPSNHA, DGSTSGLPMGSHTNGS, and LTQQHPAGVTSS. The segment covering 458-470 has biased composition (low complexity); sequence PSQGSSSRSTTTN.

It is found in the nucleus. Transcription factor that specifically regulates the expression of the gene cluster that mediates the biosynthesis of the cytotoxic leucine-containing cytochalasans, including aspochalasin C, aspochalasin E, TMC-169, flavichalasine F, aspergillin PZ, aspochalasin M and flavichalasine G. In Aspergillus flavipes, this protein is Transcription factor ffsR.